We begin with the raw amino-acid sequence, 449 residues long: Glucose-6-phosphate isomerase (449 aa).

Residue E291 is the Proton donor of the active site. Residues H312 and K426 contribute to the active site.

Belongs to the GPI family.

It is found in the cytoplasm. The enzyme catalyses alpha-D-glucose 6-phosphate = beta-D-fructose 6-phosphate. It participates in carbohydrate biosynthesis; gluconeogenesis. Its pathway is carbohydrate degradation; glycolysis; D-glyceraldehyde 3-phosphate and glycerone phosphate from D-glucose: step 2/4. In terms of biological role, catalyzes the reversible isomerization of glucose-6-phosphate to fructose-6-phosphate. In Streptococcus mutans serotype c (strain ATCC 700610 / UA159), this protein is Glucose-6-phosphate isomerase.